The chain runs to 257 residues: Gasdermin-like protein rcd-1-1 (257 aa).

Belongs to the gasdermin family. Heterooligomer; the heterooligomer with rcd-1-2 forms a ring-shaped pore complex when inserted in the membrane.

The protein localises to the cytoplasm. Its subcellular location is the cell membrane. Functionally, gasdermin-like protein involved in heterokaryon incompatibility, a process that ensures that during spontaneous vegetative cell fusion, only compatible cells from the same colony survive (non-self-recognition). In N.crassa, the rcd-1 locus exists as 2 incompatible alleles, rcd-1-1 (this entry) and rcd-1-2 (AC P0DW10). During the allorecognition process, forms a heterooligomer with rcd-1-2, thereby forming a functional gasdermin-like complex that binds to membranes and forms pores, triggering cell death. Binds negatively charged phospholipids, such as cardiolipin and phosphatidylserine. Also binds to phosphoinositides, preferentially to phosphatidylinositol-3-phosphate (PtdIns-3-P), PtdIns-5-P and PtdIns-3,5-P2. In Neurospora crassa (strain ATCC 24698 / 74-OR23-1A / CBS 708.71 / DSM 1257 / FGSC 987), this protein is Gasdermin-like protein rcd-1-1.